The primary structure comprises 359 residues: MMKDKEHVIVGISGGVDSAVAACILIENGYRVTGLHIKVLDHSDDSLHLEKSPLIISDRKEFRFPVFSLNLSGSFRRDVIDYFLQDYLSGRTPNPCMVCNKLIKWKGLLKGADLLQATLVATGHYARIDCGREKCRLLKGTDSQKDQSYFLWMLSSEELSKTLLPVGNLTKQEVRELARRFGVRAAEKKESQEICFVPDNDYREVVKSSRPGLAEKLTGGEIIDTEGKVIGHHAGYPFYTIGQRKGLGISSPEPLYVNRLDPEKNRIRVGGKAMLQCRKLIAGQMNWTGISPPETSTRAAARIRYRDTGEACTIVPVEKERFEVIFDKPKQSVTPGQAVVFYRDDEVIGGGIIVEAISE.

Residues Gly-11–Ser-18 and Ile-37 contribute to the ATP site. The Nucleophile role is filled by Cys-99. Cys-99 and Cys-195 form a disulfide bridge. Gly-123 contributes to the ATP binding site. The interval Lys-145 to Gln-147 is interaction with tRNA. Cys-195 serves as the catalytic Cysteine persulfide intermediate. The interaction with tRNA stretch occupies residues Arg-304 to Tyr-305.

It belongs to the MnmA/TRMU family.

It is found in the cytoplasm. It catalyses the reaction S-sulfanyl-L-cysteinyl-[protein] + uridine(34) in tRNA + AH2 + ATP = 2-thiouridine(34) in tRNA + L-cysteinyl-[protein] + A + AMP + diphosphate + H(+). Functionally, catalyzes the 2-thiolation of uridine at the wobble position (U34) of tRNA, leading to the formation of s(2)U34. The protein is tRNA-specific 2-thiouridylase MnmA of Chlorobium phaeobacteroides (strain BS1).